Reading from the N-terminus, the 181-residue chain is SecB-like chaperone Rv1957 (181 aa).

The residue at position 2 (T2) is an N-acetylthreonine.

The protein belongs to the SecB-like family. In terms of assembly, homotetramer, interacts with antitoxin HigA1.

Its function is as follows. Chaperone component of an atypical, type II toxin-antitoxin chaperone (TAC) system. Prevents antitoxin HigA1 aggregation in vitro at a 1:3 chaperone:antitoxin ratio, probably also protects antitoxin HigA1 from protease. Required for neutralization of toxin HigB1 upon ectopic expression in Mycobacterium marinum or E.coli. When expressed in E.coli complements a secB deletion, restores export of OmpA and MBP and inhibits aggregation of proOmpC although it is less efficient than endogenous SecB. Complements the general chaperone function of E.coli SecB less well. In Mycobacterium tuberculosis (strain ATCC 25618 / H37Rv), this protein is SecB-like chaperone Rv1957 (secBL).